A 236-amino-acid chain; its full sequence is Purine nucleoside phosphorylase DeoD-type (236 aa).

A purine D-ribonucleoside is bound at residue H5. Phosphate is bound by residues G21, R25, R44, and 88–91; that span reads RIGS. Residues 180–182 and 204–205 contribute to the a purine D-ribonucleoside site; these read EME and SD. Catalysis depends on D205, which acts as the Proton donor.

It belongs to the PNP/UDP phosphorylase family. Homohexamer; trimer of homodimers.

The enzyme catalyses a purine D-ribonucleoside + phosphate = a purine nucleobase + alpha-D-ribose 1-phosphate. It catalyses the reaction a purine 2'-deoxy-D-ribonucleoside + phosphate = a purine nucleobase + 2-deoxy-alpha-D-ribose 1-phosphate. Catalyzes the reversible phosphorolytic breakdown of the N-glycosidic bond in the beta-(deoxy)ribonucleoside molecules, with the formation of the corresponding free purine bases and pentose-1-phosphate. The sequence is that of Purine nucleoside phosphorylase DeoD-type from Tolumonas auensis (strain DSM 9187 / NBRC 110442 / TA 4).